A 262-amino-acid polypeptide reads, in one-letter code: Trypsin eta (262 aa).

Positions 1 to 22 are cleaved as a signal peptide; the sequence is MNKVILRILAVLFLLGIYAVSA. A propeptide spans 23–27 (activation peptide); the sequence is QSDGR. Residues 28-259 enclose the Peptidase S1 domain; the sequence is IVGGADTSSY…YKDWIAKQRT (232 aa). A disulfide bond links cysteine 59 and cysteine 75. Residues histidine 74 and aspartate 120 each act as charge relay system in the active site. 2 disulfide bridges follow: cysteine 185/cysteine 200 and cysteine 211/cysteine 235. Serine 215 (charge relay system) is an active-site residue.

The protein belongs to the peptidase S1 family.

The protein resides in the secreted. It is found in the extracellular space. It carries out the reaction Preferential cleavage: Arg-|-Xaa, Lys-|-Xaa.. In Drosophila melanogaster (Fruit fly), this protein is Trypsin eta (etaTry).